Reading from the N-terminus, the 715-residue chain is Polyribonucleotide nucleotidyltransferase (715 aa).

Residues aspartate 488 and aspartate 494 each coordinate Mg(2+). The 60-residue stretch at 555–614 (PRIEVMHIPTDKIRDVIGSGGKVIREIVEKTGAKINIEDDGTVKIASSNAKEIEAAKKWI) folds into the KH domain. The S1 motif domain maps to 624-692 (GEIYEGTVVK…ERGKVRLSMK (69 aa)).

Belongs to the polyribonucleotide nucleotidyltransferase family. Requires Mg(2+) as cofactor.

The protein localises to the cytoplasm. The catalysed reaction is RNA(n+1) + phosphate = RNA(n) + a ribonucleoside 5'-diphosphate. Involved in mRNA degradation. Catalyzes the phosphorolysis of single-stranded polyribonucleotides processively in the 3'- to 5'-direction. The polypeptide is Polyribonucleotide nucleotidyltransferase (Mesorhizobium japonicum (strain LMG 29417 / CECT 9101 / MAFF 303099) (Mesorhizobium loti (strain MAFF 303099))).